We begin with the raw amino-acid sequence, 236 residues long: Uridylate kinase (236 aa).

9–12 (KFSG) is an ATP binding site. Residues 17-22 (GNSGFG) are involved in allosteric activation by GTP. A UMP-binding site is contributed by G51. ATP is bound by residues G52 and R56. Residues D72 and 133-140 (TGNPFFTT) each bind UMP. Positions 160, 166, and 169 each coordinate ATP.

Belongs to the UMP kinase family. As to quaternary structure, homohexamer.

The protein resides in the cytoplasm. It carries out the reaction UMP + ATP = UDP + ADP. The protein operates within pyrimidine metabolism; CTP biosynthesis via de novo pathway; UDP from UMP (UMPK route): step 1/1. With respect to regulation, allosterically activated by GTP. Inhibited by UTP. Functionally, catalyzes the reversible phosphorylation of UMP to UDP. This chain is Uridylate kinase, found in Helicobacter hepaticus (strain ATCC 51449 / 3B1).